The sequence spans 342 residues: Galactose mutarotase (342 aa).

Beta-D-galactose-binding positions include 81 to 82 (NR) and histidine 107. Serine 124 is modified (phosphoserine). Histidine 176 functions as the Proton donor in the catalytic mechanism. Residues 176-178 (HSY), aspartate 243, glutamine 279, and glutamate 307 contribute to the beta-D-galactose site. The active-site Proton acceptor is glutamate 307.

The protein belongs to the aldose epimerase family. In terms of assembly, monomer.

The protein resides in the cytoplasm. It catalyses the reaction alpha-D-galactose = beta-D-galactose. It carries out the reaction alpha-D-glucose = beta-D-glucose. It functions in the pathway carbohydrate metabolism; hexose metabolism. Its pathway is carbohydrate metabolism; galactose metabolism. Mutarotase that catalyzes the interconversion of beta-D-galactose and alpha-D-galactose during galactose metabolism. Beta-D-galactose is metabolized in the liver into glucose 1-phosphate, the primary metabolic fuel, by the action of four enzymes that constitute the Leloir pathway: GALM, GALK1 (galactokinase), GALT (galactose-1-phosphate uridylyltransferase) and GALE (UDP-galactose-4'-epimerase). Involved in the maintenance of the equilibrium between the beta- and alpha-anomers of galactose, therefore ensuring a sufficient supply of the alpha-anomer for GALK1. Also active on D-glucose although shows a preference for galactose over glucose. The polypeptide is Galactose mutarotase (GALM) (Bos taurus (Bovine)).